The primary structure comprises 525 residues: Peptide chain release factor 3 (525 aa).

The tr-type G domain maps to aspartate 11–alanine 279. Residues serine 20–threonine 27, aspartate 88–histidine 92, and asparagine 142–aspartate 145 each bind GTP.

This sequence belongs to the TRAFAC class translation factor GTPase superfamily. Classic translation factor GTPase family. PrfC subfamily.

Its subcellular location is the cytoplasm. Its function is as follows. Increases the formation of ribosomal termination complexes and stimulates activities of RF-1 and RF-2. It binds guanine nucleotides and has strong preference for UGA stop codons. It may interact directly with the ribosome. The stimulation of RF-1 and RF-2 is significantly reduced by GTP and GDP, but not by GMP. This chain is Peptide chain release factor 3, found in Levilactobacillus brevis (strain ATCC 367 / BCRC 12310 / CIP 105137 / JCM 1170 / LMG 11437 / NCIMB 947 / NCTC 947) (Lactobacillus brevis).